Here is a 204-residue protein sequence, read N- to C-terminus: MSSKNNPESETKAKNKWEKVMEAEEEQEEGGGDGSQEMEPHREGLEFPSREKLEGQLTRMEHKVDEYKTQYLRAQAEMDNLRKRIEREKADIIKFGSKQLITDLLPVADSLIHGLESPASEDPQVKSMRDGMSLTLDLLHNTLAKHGVQVINPNPGDPFDPALHEAMSVQAVPDAKPDTIIQVLQKGYQLNGRVLRAARVIVAG.

The interval 1–52 is disordered; the sequence is MSSKNNPESETKAKNKWEKVMEAEEEQEEGGGDGSQEMEPHREGLEFPSREK. Composition is skewed to basic and acidic residues over residues 7-22 and 38-52; these read PESE…KVME and MEPH…SREK.

This sequence belongs to the GrpE family. In terms of assembly, homodimer.

Its subcellular location is the cytoplasm. Functionally, participates actively in the response to hyperosmotic and heat shock by preventing the aggregation of stress-denatured proteins, in association with DnaK and GrpE. It is the nucleotide exchange factor for DnaK and may function as a thermosensor. Unfolded proteins bind initially to DnaJ; upon interaction with the DnaJ-bound protein, DnaK hydrolyzes its bound ATP, resulting in the formation of a stable complex. GrpE releases ADP from DnaK; ATP binding to DnaK triggers the release of the substrate protein, thus completing the reaction cycle. Several rounds of ATP-dependent interactions between DnaJ, DnaK and GrpE are required for fully efficient folding. The sequence is that of Protein GrpE from Coxiella burnetii (strain Dugway 5J108-111).